Reading from the N-terminus, the 331-residue chain is Probable zinc-binding oxidoreductase, mitochondrial (331 aa).

Residues 1–29 (MASVTSVPKTGRSVNQDVPATTLTLQTRP) show a composition bias toward polar residues. Residues 1–34 (MASVTSVPKTGRSVNQDVPATTLTLQTRPTPAPN) form a disordered region.

It belongs to the zinc-containing alcohol dehydrogenase family. Quinone oxidoreductase subfamily.

The protein localises to the mitochondrion. The protein is Probable zinc-binding oxidoreductase, mitochondrial of Arthroderma benhamiae (strain ATCC MYA-4681 / CBS 112371) (Trichophyton mentagrophytes).